Reading from the N-terminus, the 496-residue chain is Probable CtpA-like serine protease (496 aa).

Residues 1–16 are compositionally biased toward basic and acidic residues; it reads MDDKQHTSSSDDERAE. The interval 1 to 27 is disordered; it reads MDDKQHTSSSDDERAEIATSNQDQETN. Over residues 18 to 27 the composition is skewed to polar residues; sequence ATSNQDQETN. Residues 39–59 traverse the membrane as a helical segment; sequence FISILIGTILITAVITVVAYI. The region spanning 124–206 is the PDZ domain; that stretch reads TKSFNEGVSG…TEVTLTVQRG (83 aa). Active-site charge relay system residues include Ser329, Asp340, and Lys354.

Belongs to the peptidase S41A family.

Its subcellular location is the cell membrane. In Staphylococcus aureus (strain COL), this protein is Probable CtpA-like serine protease.